A 515-amino-acid chain; its full sequence is Fatty acyl-CoA reductase 1 (515 aa).

Residues 1–465 (MVSIPEYYEG…ARKHLNKLRN (465 aa)) lie on the Cytoplasmic side of the membrane. Residues 451-507 (SGLPAARKHLNKLRNIRYGFNTILVILIWRIFIARSQMARNIWYFVVSLCYKFLSYF) are necessary and sufficient for PEX19-mediated localization into peroxisome membrane. A helical transmembrane segment spans residues 466–483 (IRYGFNTILVILIWRIFI). The Peroxisomal segment spans residues 484–515 (ARSQMARNIWYFVVSLCYKFLSYFRASSTMRY).

The protein belongs to the fatty acyl-CoA reductase family. Interacts with PEX19; PEX19 mediates the targeting of FAR1 to peroxisomes. In terms of tissue distribution, widely expressed. Expressed in all tissues examined. Highest expression seen in preputial gland. Expressed in the brain where large quantities of ether lipids are synthesized.

The protein resides in the peroxisome membrane. The catalysed reaction is a long-chain fatty acyl-CoA + 2 NADPH + 2 H(+) = a long-chain primary fatty alcohol + 2 NADP(+) + CoA. The enzyme catalyses hexadecanoyl-CoA + 2 NADPH + 2 H(+) = hexadecan-1-ol + 2 NADP(+) + CoA. It carries out the reaction octadecanoyl-CoA + 2 NADPH + 2 H(+) = octadecan-1-ol + 2 NADP(+) + CoA. It catalyses the reaction (9Z)-octadecenoyl-CoA + 2 NADPH + 2 H(+) = (9Z)-octadecen-1-ol + 2 NADP(+) + CoA. The catalysed reaction is (9Z,12Z)-octadecadienoyl-CoA + 2 NADPH + 2 H(+) = (9Z,12Z)-octadecadien-1-ol + 2 NADP(+) + CoA. The enzyme catalyses eicosanoyl-CoA + 2 NADPH + 2 H(+) = eicosan-1-ol + 2 NADP(+) + CoA. It carries out the reaction 16-methylheptadecanoyl-CoA + 2 NADPH + 2 H(+) = 16-methylheptadecan-1-ol + 2 NADP(+) + CoA. It catalyses the reaction 18-methylnonadecanoyl-CoA + 2 NADPH + 2 H(+) = 18-methylnonadecan-1-ol + 2 NADP(+) + CoA. In terms of biological role, catalyzes the reduction of saturated and unsaturated C16 or C18 fatty acyl-CoA to fatty alcohols. It plays an essential role in the production of ether lipids/plasmalogens which synthesis requires fatty alcohols. In parallel, it is also required for wax monoesters production since fatty alcohols also constitute a substrate for their synthesis. This Mus musculus (Mouse) protein is Fatty acyl-CoA reductase 1.